Here is a 466-residue protein sequence, read N- to C-terminus: Sulfate adenylyltransferase subunit 1 (466 aa).

One can recognise a tr-type G domain in the interval 22–237 (KELVRFLTCG…LNTIDVKTQE (216 aa)). Positions 31–38 (GSVDDGKS) are G1. 31–38 (GSVDDGKS) contacts GTP. Positions 89–93 (GITID) are G2. A G3 region spans residues 110-113 (DTPG). GTP contacts are provided by residues 110–114 (DTPGH) and 165–168 (NKMD). The interval 165–168 (NKMD) is G4. The G5 stretch occupies residues 202 to 204 (SAL).

It belongs to the TRAFAC class translation factor GTPase superfamily. Classic translation factor GTPase family. CysN/NodQ subfamily. In terms of assembly, heterodimer composed of CysD, the smaller subunit, and CysN.

The catalysed reaction is sulfate + ATP + H(+) = adenosine 5'-phosphosulfate + diphosphate. It participates in sulfur metabolism; hydrogen sulfide biosynthesis; sulfite from sulfate: step 1/3. Its function is as follows. With CysD forms the ATP sulfurylase (ATPS) that catalyzes the adenylation of sulfate producing adenosine 5'-phosphosulfate (APS) and diphosphate, the first enzymatic step in sulfur assimilation pathway. APS synthesis involves the formation of a high-energy phosphoric-sulfuric acid anhydride bond driven by GTP hydrolysis by CysN coupled to ATP hydrolysis by CysD. The protein is Sulfate adenylyltransferase subunit 1 of Colwellia psychrerythraea (strain 34H / ATCC BAA-681) (Vibrio psychroerythus).